A 270-amino-acid chain; its full sequence is Phosphatidylglycerol--prolipoprotein diacylglyceryl transferase (270 aa).

The next 4 membrane-spanning stretches (helical) occupy residues 19-39, 56-76, 92-112, and 116-136; these read FPVYWYGIIIGTGVLLGLWLA, LVLIAVPIAILFARMYYVIFE, QGGLAIHGGLIGAVITGVLFA, and GVSFWKLADIAAPSILLGQAI. Arg-138 contributes to the a 1,2-diacyl-sn-glycero-3-phospho-(1'-sn-glycerol) binding site. Transmembrane regions (helical) follow at residues 178–198, 206–226, and 236–256; these read HPTFLYESLWNFAGVILLLAL, GELFFTYLIWYSVGRFFVEGL, and LRIAQVMSIGLVVISIIFIIV.

This sequence belongs to the Lgt family.

The protein resides in the cell membrane. It carries out the reaction L-cysteinyl-[prolipoprotein] + a 1,2-diacyl-sn-glycero-3-phospho-(1'-sn-glycerol) = an S-1,2-diacyl-sn-glyceryl-L-cysteinyl-[prolipoprotein] + sn-glycerol 1-phosphate + H(+). The protein operates within protein modification; lipoprotein biosynthesis (diacylglyceryl transfer). Functionally, catalyzes the transfer of the diacylglyceryl group from phosphatidylglycerol to the sulfhydryl group of the N-terminal cysteine of a prolipoprotein, the first step in the formation of mature lipoproteins. This chain is Phosphatidylglycerol--prolipoprotein diacylglyceryl transferase, found in Bacillus cereus (strain B4264).